Reading from the N-terminus, the 362-residue chain is uncharacterized protein (362 aa).

Disordered stretches follow at residues 1–117 (MASK…GLNR), 153–172 (SSAP…GIRK), and 210–266 (RHFD…SSSN). Positions 12 to 23 (AKKEKEIKKEIE) are enriched in basic and acidic residues. Over residues 51-70 (ENDDTDGDGKEEDAQKEDDI) the composition is skewed to acidic residues. 3 stretches are compositionally biased toward low complexity: residues 100–112 (NSPP…TRNT), 153–167 (SSAP…GSPS), and 241–265 (VPPS…TSSS).

This is an uncharacterized protein from Caenorhabditis elegans.